We begin with the raw amino-acid sequence, 308 residues long: Olfactory receptor 13H1 (308 aa).

Topologically, residues 1 to 25 (MAMDNVTAVFQFLLIGISNYPQWRD) are extracellular. Asn-5 carries an N-linked (GlcNAc...) asparagine glycan. Residues 26-46 (TFFTLVLIIYLSTLLGNGFMI) traverse the membrane as a helical segment. The Cytoplasmic portion of the chain corresponds to 47-54 (FLIHFDPN). The chain crosses the membrane as a helical span at residues 55-75 (LHTPIYFFLSNLSFLDLCYGT). The Extracellular portion of the chain corresponds to 76–99 (ASMPQALVHCFSTHPYLSYPRCLA). Residues Cys-97 and Cys-188 are joined by a disulfide bond. Residues 100-120 (QTSVSLALATAECLLLAAMAY) form a helical membrane-spanning segment. Over 121 to 139 (DRVVAISNPLRYSVVMNGP) the chain is Cytoplasmic. A helical transmembrane segment spans residues 140–159 (VCVCLVATSWGTSLVLTAML). Topologically, residues 160–196 (ILSLRLHFCGANVINHFACEILSLIKLTCSDTSLNEF) are extracellular. The helical transmembrane segment at 197 to 216 (MILITSIFTLLLPFGFVLLS) threads the bilayer. The Cytoplasmic portion of the chain corresponds to 217–236 (YIRIAMAIIRIRSLQGRLKA). Residues 237–257 (FTTCGSHLTVVTIFYGSAISM) traverse the membrane as a helical segment. Over 258–270 (YMKTQSKSYPDQD) the chain is Extracellular. A helical transmembrane segment spans residues 271-291 (KFISVFYGALTPMLNPLIYSL). Topologically, residues 292 to 308 (RKKDVKRAIRKVMLKRT) are cytoplasmic.

The protein belongs to the G-protein coupled receptor 1 family.

Its subcellular location is the cell membrane. Its function is as follows. Odorant receptor. This Homo sapiens (Human) protein is Olfactory receptor 13H1 (OR13H1).